We begin with the raw amino-acid sequence, 399 residues long: Subtilisin-like protease 4 (399 aa).

The first 19 residues, 1–19, serve as a signal peptide directing secretion; sequence MVCLKTLSVFLAAFAAADA. A propeptide spanning residues 20 to 118 is cleaved from the precursor; it reads RAVFKTQGHK…VEQDQVVRIS (99 aa). One can recognise an Inhibitor I9 domain in the interval 38–117; the sequence is YIVVMKDGVS…YVEQDQVVRI (80 aa). N-linked (GlcNAc...) asparagine glycosylation occurs at N102. The Peptidase S8 domain maps to 128 to 399; the sequence is SWGLGRVSHR…NRLLYNGSGQ (272 aa). Residues D160 and H191 each act as charge relay system in the active site. N-linked (GlcNAc...) asparagine glycans are attached at residues N252 and N308. S346 acts as the Charge relay system in catalysis. N-linked (GlcNAc...) asparagine glycosylation occurs at N395.

Belongs to the peptidase S8 family.

It is found in the secreted. Functionally, secreted subtilisin-like serine protease with keratinolytic activity that contributes to pathogenicity. This Trichophyton rubrum (Athlete's foot fungus) protein is Subtilisin-like protease 4 (SUB4).